A 119-amino-acid polypeptide reads, in one-letter code: Large ribosomal subunit protein bL20 (119 aa).

It belongs to the bacterial ribosomal protein bL20 family.

In terms of biological role, binds directly to 23S ribosomal RNA and is necessary for the in vitro assembly process of the 50S ribosomal subunit. It is not involved in the protein synthesizing functions of that subunit. In Alkaliphilus metalliredigens (strain QYMF), this protein is Large ribosomal subunit protein bL20.